Here is a 278-residue protein sequence, read N- to C-terminus: Sulfur carrier protein FdhD (278 aa).

Cys120 acts as the Cysteine persulfide intermediate in catalysis.

This sequence belongs to the FdhD family.

It is found in the cytoplasm. Functionally, required for formate dehydrogenase (FDH) activity. Acts as a sulfur carrier protein that transfers sulfur from IscS to the molybdenum cofactor prior to its insertion into FDH. In Bordetella petrii (strain ATCC BAA-461 / DSM 12804 / CCUG 43448), this protein is Sulfur carrier protein FdhD.